The sequence spans 204 residues: UPF0637 protein SAS1041 (204 aa).

It belongs to the UPF0637 family.

This Staphylococcus aureus (strain MSSA476) protein is UPF0637 protein SAS1041.